The primary structure comprises 750 residues: von Willebrand factor A domain-containing protein DDB_G0292188 (750 aa).

The VWFA domain occupies 17 to 249 (EIKTVFNSDS…IKDDLLLDVV (233 aa)). 2 stretches are compositionally biased toward low complexity: residues 586 to 595 (SINDNNNSFN) and 603 to 645 (PFFE…SSAS). The interval 586–657 (SINDNNNSFN…PPPSQMLNEQ (72 aa)) is disordered.

The sequence is that of von Willebrand factor A domain-containing protein DDB_G0292188 from Dictyostelium discoideum (Social amoeba).